Consider the following 378-residue polypeptide: Probable pectin lyase A (378 aa).

The signal sequence occupies residues 1-18; it reads MKYQGLLAIAGCIASASA. 2 cysteine pairs are disulfide-bonded: C81–C100 and C90–C224. The N-linked (GlcNAc...) asparagine glycan is linked to N127. The active site involves R254. C321 and C329 are joined by a disulfide.

It belongs to the polysaccharide lyase 1 family.

It is found in the secreted. The catalysed reaction is Eliminative cleavage of (1-&gt;4)-alpha-D-galacturonan methyl ester to give oligosaccharides with 4-deoxy-6-O-methyl-alpha-D-galact-4-enuronosyl groups at their non-reducing ends.. Its function is as follows. Pectinolytic enzymes consist of four classes of enzymes: pectin lyase, polygalacturonase, pectin methylesterase and rhamnogalacturonase. Among pectinolytic enzymes, pectin lyase is the most important in depolymerization of pectin, since it cleaves internal glycosidic bonds of highly methylated pectins. The polypeptide is Probable pectin lyase A (pelA) (Neosartorya fischeri (strain ATCC 1020 / DSM 3700 / CBS 544.65 / FGSC A1164 / JCM 1740 / NRRL 181 / WB 181) (Aspergillus fischerianus)).